The primary structure comprises 134 residues: Ribulose bisphosphate carboxylase small subunit (134 aa).

It belongs to the RuBisCO small chain family. Heterohexadecamer of 8 large and 8 small subunits.

RuBisCO catalyzes two reactions: the carboxylation of D-ribulose 1,5-bisphosphate, the primary event in carbon dioxide fixation, as well as the oxidative fragmentation of the pentose substrate. Both reactions occur simultaneously and in competition at the same active site. Although the small subunit is not catalytic it is essential for maximal activity. This Bradyrhizobium diazoefficiens (strain JCM 10833 / BCRC 13528 / IAM 13628 / NBRC 14792 / USDA 110) protein is Ribulose bisphosphate carboxylase small subunit.